Here is a 109-residue protein sequence, read N- to C-terminus: Tyrosine-protein phosphatase 6 (109 aa).

A Tyrosine-protein phosphatase domain is found at 1–109; sequence YNINVIVMVC…SEDETTPLCV (109 aa). Substrate is bound at residue Asp76.

This sequence belongs to the protein-tyrosine phosphatase family.

The catalysed reaction is O-phospho-L-tyrosyl-[protein] + H2O = L-tyrosyl-[protein] + phosphate. In Styela plicata (Wrinkled sea squirt), this protein is Tyrosine-protein phosphatase 6 (STY-6).